The primary structure comprises 453 residues: Cysteine desulfurase, mitochondrial (453 aa).

The N-terminal 34 residues, Met-1–Thr-34, are a transit peptide targeting the mitochondrion. Pyridoxal 5'-phosphate-binding positions include Ala-123–Thr-124, Asn-203, Gln-231, and Ser-251–His-253. Lys-254 bears the N6-(pyridoxal phosphate)lysine mark. Thr-291 contacts pyridoxal 5'-phosphate. The active-site Cysteine persulfide intermediate is the Cys-377. Position 377 (Cys-377) interacts with [2Fe-2S] cluster.

This sequence belongs to the class-V pyridoxal-phosphate-dependent aminotransferase family. NifS/IscS subfamily. As to quaternary structure, interacts with FH. Interacts with SUFE1. Pyridoxal 5'-phosphate serves as cofactor.

The protein resides in the mitochondrion. The enzyme catalyses (sulfur carrier)-H + L-cysteine = (sulfur carrier)-SH + L-alanine. Threefold increase in the catalytic activity in the presence of FH (frataxin). 30-fold increase in the catalytic activity in the presence of SUFE1. Functionally, catalyzes the removal of elemental sulfur from cysteine to produce alanine. Supplies the inorganic sulfur for iron-sulfur (Fe-S) clusters. The protein is Cysteine desulfurase, mitochondrial of Arabidopsis thaliana (Mouse-ear cress).